Here is a 966-residue protein sequence, read N- to C-terminus: SH3 domain-binding protein 4 (966 aa).

Residues 57-116 (GAAREVVAIKDCCPSSFTTLKFSKGDRLYVLDSSGAEWWYAHNNTEMGYIPAAYVEPINY) enclose the SH3 1 domain. A ZU5 domain is found at 322–457 (TNIVCRLDSS…LEPCMYVCVV (136 aa)). Residues 657–727 (NNLKFGKLIK…HAKNVLVVGK (71 aa)) enclose the SH3 2 domain.

Homodimer or homooligomer.

It localises to the membrane. Its subcellular location is the clathrin-coated pit. The protein localises to the cytoplasmic vesicle. It is found in the clathrin-coated vesicle. The protein resides in the nucleus. Functionally, possible role in regulating endocytosis of the transferrin receptor at the plasma membrane. Alternatively, may function as a negative regulator of the amino acid-induced TOR signaling by inhibiting the formation of active Rag GTPase complexes. Preferentially binds inactive Rag GTPase complexes and prevents their interaction with the mTORC1 complex inhibiting its relocalization to lysosomes and its activation. Thereby, may indirectly regulate cell growth, proliferation and autophagy. This Seriola quinqueradiata (Five-ray yellowtail) protein is SH3 domain-binding protein 4 (sh3bp4).